A 787-amino-acid polypeptide reads, in one-letter code: Pleckstrin homology domain-containing family G member 6 (787 aa).

One can recognise a DH domain in the interval 161-353; that stretch reads HQQEALWELL…ESFLRHINGQ (193 aa). One can recognise a PH domain in the interval 409–509; it reads QLLLEGPVRV…WLEKTQHAQT (101 aa). The interval 533 to 762 is disordered; it reads QGTESPSTRP…EPGNGKPRRL (230 aa). Positions 535–557 are enriched in low complexity; sequence TESPSTRPSTPSPSPEDSQSSAE. Positions 724-742 are enriched in basic and acidic residues; the sequence is LRPRSLREDMLREIREELA.

Interacts with MYH10. Interacts with ELMO1 and EZR (in an open conformation). Interacts with CSPP1.

Its subcellular location is the cell projection. It localises to the microvillus. The protein localises to the cytoplasm. It is found in the cytoskeleton. The protein resides in the spindle. Its subcellular location is the cleavage furrow. Its function is as follows. Guanine nucleotide exchange factor activating the small GTPase RHOA, which, in turn, induces myosin filament formation. Also activates RHOG. Does not activate RAC1, or to a much lower extent than RHOA and RHOG. Part of a functional unit, involving PLEKHG6, MYH10 and RHOA, at the cleavage furrow to advance furrow ingression during cytokinesis. In epithelial cells, required for the formation of microvilli and membrane ruffles on the apical pole. Along with EZR, required for normal macropinocytosis. The polypeptide is Pleckstrin homology domain-containing family G member 6 (Plekhg6) (Mus musculus (Mouse)).